A 57-amino-acid polypeptide reads, in one-letter code: Ribosome modulation factor (57 aa).

Residues 1-28 (MKRQKRDRLERAQSQGYKAGLNGRSHDE) form a disordered region.

This sequence belongs to the ribosome modulation factor family.

The protein resides in the cytoplasm. During stationary phase, converts 70S ribosomes to an inactive dimeric form (100S ribosomes). In Vibrio cholerae serotype O1 (strain MJ-1236), this protein is Ribosome modulation factor.